A 392-amino-acid polypeptide reads, in one-letter code: ESX-1 secretion-associated protein EspA (392 aa).

Residues 302-392 are disordered; that stretch reads TRQALRPRAD…GQKVLVRNVV (91 aa). Residues 334–344 are compositionally biased toward gly residues; it reads QGMGGPVGMGG.

As to quaternary structure, homodimer; disulfide-linked.

Its subcellular location is the secreted. In terms of biological role, required for secretion of EsxA (ESAT-6) and EsxB (CFP-10) and for virulence. The chain is ESX-1 secretion-associated protein EspA from Mycobacterium tuberculosis (strain CDC 1551 / Oshkosh).